The primary structure comprises 222 residues: Voltage-dependent calcium channel gamma-1 subunit (222 aa).

Residues 1–10 lie on the Cytoplasmic side of the membrane; that stretch reads MSQTKMLKVR. A helical membrane pass occupies residues 11–29; it reads VTLFCILAGIVLAMTAVVT. Over 30–108 the chain is Extracellular; sequence DHWAVLSPHM…TQKEYSISAA (79 aa). 2 N-linked (GlcNAc...) asparagine glycosylation sites follow: N43 and N79. The cysteines at positions 57 and 80 are disulfide-linked. The helical transmembrane segment at 109-129 threads the bilayer; the sequence is AIAIFSLGFIILGSLCVLLSL. The Cytoplasmic portion of the chain corresponds to 130–134; sequence GKKRD. The helical transmembrane segment at 135 to 155 threads the bilayer; it reads YLLRPASMFYAFAGLCILVSV. Over 156 to 179 the chain is Extracellular; it reads EVMRQSVKRMIDSEDTVWIEYYYS. Residues 180-204 traverse the membrane as a helical segment; the sequence is WSFACACAAFILLFLGGLALLLFSL. The Cytoplasmic segment spans residues 205–222; the sequence is PRMPRNPWESCMDAEPEH.

The protein belongs to the PMP-22/EMP/MP20 family. CACNG subfamily. Component of a calcium channel complex consisting of a pore-forming alpha subunit (CACNA1S) and the ancillary subunits CACNB1 or CACNB2, CACNG1 and CACNA2D1. The channel complex contains alpha, beta, gamma and delta subunits in a 1:1:1:1 ratio, i.e. it contains either CACNB1 or CACNB2. Post-translationally, N-glycosylated. As to expression, skeletal muscle.

The protein resides in the cell membrane. Its subcellular location is the sarcolemma. Regulatory subunit of the voltage-gated calcium channel that gives rise to L-type calcium currents in skeletal muscle. Regulates channel inactivation kinetics. The sequence is that of Voltage-dependent calcium channel gamma-1 subunit (CACNG1) from Homo sapiens (Human).